Reading from the N-terminus, the 415-residue chain is MTLTDDTTTAQNSRHGDPIEVARELTRKWQTTVVERDKAGGSATEEREDLRASGLLSVTVPRHLGGWGADWPTALEVVREIAKVDGSLGHLFGYHLSTPAVIDLWGSPEQKERLLRQLAENNWWTGNASSENNSHILDWKVTATPADDGGYFFNGIKHFSSGAKGSDLLLVFGVIPEGFPQQGAIVAAAIPTTREGVQPNDDWQALGMRRTDSGTTEFHNVAVRPDEVLGKPNAILEAFLASGRGSLFGPIVQLVFSSVYLGIARGALETAREYTRTQARPWTPAGVTQAVEDPYTIRSYGEFGIQLQAADAAAREAAQLLQAAWDKGDALTSQERGELMVQISGVKAIATQAALDVTSRIFEVIGARGTHPKYGFDRFWRNIRTHTLHDPVSYKIAEVGNYVLNQRYPIPGFTS.

FMN is bound by residues Tyr-94, 127–132 (NASSEN), 157–161 (KHFSS), Arg-280, 365–366 (IG), and Thr-387. The tract at residues 129–140 (SSENNSHILDWK) is lid loop.

This sequence belongs to the DszC flavin monooxygenase family. As to quaternary structure, homotetramer.

It is found in the cytoplasm. It catalyses the reaction dibenzothiophene + 2 FMNH2 + 2 O2 = dibenzothiophene 5,5-dioxide + 2 FMN + 2 H2O + 2 H(+). It carries out the reaction dibenzothiophene + FMNH2 + O2 = dibenzothiophene 5-oxide + FMN + H2O + H(+). The enzyme catalyses dibenzothiophene 5-oxide + FMNH2 + O2 = dibenzothiophene 5,5-dioxide + FMN + H2O + H(+). It participates in sulfur metabolism; dibenzothiophene degradation. Its activity is regulated as follows. Inhibited at high concentrations of FMN or FAD. Functionally, catalyzes the first step of the '4S' desulfurization pathway that removes covalently bound sulfur from dibenzothiophene (DBT) without breaking carbon-carbon bonds. Sulfur dioxygenase which converts DBT to DBT-sulfone (DBTO2 or DBT 5,5-dioxide) probably in a stepwise manner. In addition to FMNH2 can also use FAD (although FAD is less efficient). This Mycolicibacterium goodii (Mycobacterium goodii) protein is Dibenzothiophene monooxygenase.